Here is a 423-residue protein sequence, read N- to C-terminus: UDP-N-acetylglucosamine 1-carboxyvinyltransferase 1 (423 aa).

Residue 23–24 (KN) coordinates phosphoenolpyruvate. Arginine 96 contributes to the UDP-N-acetyl-alpha-D-glucosamine binding site. Cysteine 120 functions as the Proton donor in the catalytic mechanism. The residue at position 120 (cysteine 120) is a 2-(S-cysteinyl)pyruvic acid O-phosphothioketal. Residues aspartate 309 and valine 331 each coordinate UDP-N-acetyl-alpha-D-glucosamine.

Belongs to the EPSP synthase family. MurA subfamily.

Its subcellular location is the cytoplasm. It catalyses the reaction phosphoenolpyruvate + UDP-N-acetyl-alpha-D-glucosamine = UDP-N-acetyl-3-O-(1-carboxyvinyl)-alpha-D-glucosamine + phosphate. Its pathway is cell wall biogenesis; peptidoglycan biosynthesis. In terms of biological role, cell wall formation. Adds enolpyruvyl to UDP-N-acetylglucosamine. This is UDP-N-acetylglucosamine 1-carboxyvinyltransferase 1 from Streptococcus pyogenes serotype M1.